Consider the following 214-residue polypeptide: Putative archaetidylserine decarboxylase proenzyme (214 aa).

The active-site Schiff-base intermediate with substrate; via pyruvic acid is the Ser-180. Ser-180 bears the Pyruvic acid (Ser); by autocatalysis mark.

This sequence belongs to the phosphatidylserine decarboxylase family. PSD-A subfamily. Heterodimer of a large membrane-associated beta subunit and a small pyruvoyl-containing alpha subunit. Requires pyruvate as cofactor. Post-translationally, is synthesized initially as an inactive proenzyme. Formation of the active enzyme involves a self-maturation process in which the active site pyruvoyl group is generated from an internal serine residue via an autocatalytic post-translational modification. Two non-identical subunits are generated from the proenzyme in this reaction, and the pyruvate is formed at the N-terminus of the alpha chain, which is derived from the carboxyl end of the proenzyme. The post-translation cleavage follows an unusual pathway, termed non-hydrolytic serinolysis, in which the side chain hydroxyl group of the serine supplies its oxygen atom to form the C-terminus of the beta chain, while the remainder of the serine residue undergoes an oxidative deamination to produce ammonia and the pyruvoyl prosthetic group on the alpha chain.

It localises to the cell membrane. The catalysed reaction is archaetidylserine + H(+) = archaetidylethanolamine + CO2. Functionally, catalyzes the formation of archaetidylethanolamine (PtdEtn) from archaetidylserine (PtdSer). The chain is Putative archaetidylserine decarboxylase proenzyme from Methanopyrus kandleri (strain AV19 / DSM 6324 / JCM 9639 / NBRC 100938).